Reading from the N-terminus, the 98-residue chain is Plastocyanin (98 aa).

The Plastocyanin-like domain occupies 1-98; sequence AQIVKLGGDD…AGMKMTITVQ (98 aa). Cu(2+) contacts are provided by His38, Cys83, His86, and Met91.

Belongs to the plastocyanin family. The cofactor is Cu(2+).

The protein localises to the plastid. It is found in the chloroplast thylakoid membrane. Participates in electron transfer between P700 and the cytochrome b6-f complex in photosystem I. Has antiviral activity against Potato virus Y (strain N). The chain is Plastocyanin (PETE) from Ulva pertusa (Sea lettuce).